Reading from the N-terminus, the 285-residue chain is ATP synthase subunit a (285 aa).

Transmembrane regions (helical) follow at residues 41–61 (TWHVDTLAWSIGLGLIFLWIF), 102–122 (IAPLALTIFVWVFLMNLMDLI), 164–184 (LGVFILMVGFAIKIKGIGGFI), 197–217 (VFVQILLIPFNLLLELIALVS), 226–246 (LFGNLYAGELIFILIGAIGFM), and 252–272 (FVWAVFHILVITLQAFLFMML).

The protein belongs to the ATPase A chain family. In terms of assembly, F-type ATPases have 2 components, CF(1) - the catalytic core - and CF(0) - the membrane proton channel. CF(1) has five subunits: alpha(3), beta(3), gamma(1), delta(1), epsilon(1). CF(0) has three main subunits: a(1), b(2) and c(9-12). The alpha and beta chains form an alternating ring which encloses part of the gamma chain. CF(1) is attached to CF(0) by a central stalk formed by the gamma and epsilon chains, while a peripheral stalk is formed by the delta and b chains.

It is found in the cell inner membrane. In terms of biological role, key component of the proton channel; it plays a direct role in the translocation of protons across the membrane. The protein is ATP synthase subunit a of Pseudoalteromonas translucida (strain TAC 125).